The sequence spans 603 residues: HAUS augmin-like complex subunit 3 (603 aa).

At serine 2 the chain carries N-acetylserine. 4 coiled-coil regions span residues 93 to 177 (RLDD…TQLM), 305 to 336 (VDKENLDAKISSLTSEIMKLEKEVTQIKDRSL), 389 to 426 (LSYEIELRKHRDIYRQLENLVQELSQSNMMLYKQLEML), and 458 to 495 (ENKKKELFLTHGNLEEVAEKLKQNISLVQDQLAVSAQE).

This sequence belongs to the HAUS3 family. In terms of assembly, component of the HAUS augmin-like complex. The complex interacts with the gamma-tubulin ring complex and this interaction is required for spindle assembly. Interacts with EML3 (phosphorylated at 'Thr-881').

The protein localises to the cytoplasm. It localises to the cytoskeleton. Its subcellular location is the microtubule organizing center. The protein resides in the centrosome. It is found in the spindle. Functionally, contributes to mitotic spindle assembly, maintenance of centrosome integrity and completion of cytokinesis as part of the HAUS augmin-like complex. This is HAUS augmin-like complex subunit 3 (HAUS3) from Homo sapiens (Human).